We begin with the raw amino-acid sequence, 598 residues long: Trichothecene efflux pump TRI12 (598 aa).

Residues 42–62 traverse the membrane as a helical segment; sequence IVASFAAFSMNVVATYFVLQA. Asn79 carries N-linked (GlcNAc...) asparagine glycosylation. The next 2 membrane-spanning stretches (helical) occupy residues 109–129 and 135–155; these read PFVI…CTAT and LAAM…PLFI. A glycan (N-linked (GlcNAc...) asparagine) is linked at Asn161. 10 consecutive transmembrane segments (helical) span residues 165-185, 197-217, 241-261, 273-293, 312-332, 356-376, 381-401, 409-429, 442-462, and 533-553; these read FLGL…SPYL, WIFY…IIWY, WIGI…VSWG, VIGL…YEVY, FVCI…LVIM, ATAS…FHLV, WQIL…SSIN, IALS…TMLL, AFAV…AAFI, and ANVY…SLCM. The disordered stretch occupies residues 579 to 598; the sequence is LEGNSESQPSPIILSMADKE.

The protein belongs to the major facilitator superfamily.

It localises to the cell membrane. Its function is as follows. Efflux pump that provides the dual role of trichothecene export and self-protection by allowing the fungus to evade the harmful effect of its own trichothecene production. The sequence is that of Trichothecene efflux pump TRI12 from Fusarium sporotrichioides.